We begin with the raw amino-acid sequence, 219 residues long: Germin-like protein subfamily 2 member 3 (219 aa).

The N-terminal stretch at 1–22 (MATSMIPIFVTFMLVAAHMALA) is a signal peptide. A disulfide bridge connects residues C31 and C46. The Cupin type-1 domain maps to 60–209 (IGLATAAATA…AFGAAAPEIQ (150 aa)). Residue N70 is glycosylated (N-linked (GlcNAc...) asparagine). Mn(2+) is bound by residues H109, H111, E116, and H155.

It belongs to the germin family. Oligomer (believed to be a pentamer but probably hexamer).

It is found in the secreted. It localises to the extracellular space. Its subcellular location is the apoplast. May play a role in plant defense. Probably has no oxalate oxidase activity even if the active site is conserved. The polypeptide is Germin-like protein subfamily 2 member 3 (GLP8) (Arabidopsis thaliana (Mouse-ear cress)).